The following is a 194-amino-acid chain: Dephospho-CoA kinase (194 aa).

Positions 3–194 (TIGLTGGIGS…EQVDGFWGGL (192 aa)) constitute a DPCK domain. Residue 11–16 (GSGKST) coordinates ATP.

The protein belongs to the CoaE family.

Its subcellular location is the cytoplasm. It catalyses the reaction 3'-dephospho-CoA + ATP = ADP + CoA + H(+). It participates in cofactor biosynthesis; coenzyme A biosynthesis; CoA from (R)-pantothenate: step 5/5. Catalyzes the phosphorylation of the 3'-hydroxyl group of dephosphocoenzyme A to form coenzyme A. The chain is Dephospho-CoA kinase from Corynebacterium jeikeium (strain K411).